A 241-amino-acid polypeptide reads, in one-letter code: Uridylate kinase (241 aa).

12–15 (KLSG) serves as a coordination point for ATP. Glycine 54 is a UMP binding site. ATP is bound by residues glycine 55 and arginine 59. UMP contacts are provided by residues aspartate 74 and 135–142 (VGAPYFTT). ATP is bound by residues threonine 162, tyrosine 168, and aspartate 171.

It belongs to the UMP kinase family. Homohexamer.

It is found in the cytoplasm. The enzyme catalyses UMP + ATP = UDP + ADP. Its pathway is pyrimidine metabolism; CTP biosynthesis via de novo pathway; UDP from UMP (UMPK route): step 1/1. Its activity is regulated as follows. Inhibited by UTP. In terms of biological role, catalyzes the reversible phosphorylation of UMP to UDP. The polypeptide is Uridylate kinase (Sphingopyxis alaskensis (strain DSM 13593 / LMG 18877 / RB2256) (Sphingomonas alaskensis)).